Consider the following 160-residue polypeptide: MIDVELNDEGQFLSSEQLQLVKDVLNHAAQEVSLSQQSEVSVTFTTEEDIHELNREHRGIDRPTDVLSFALNDETSDFDPTFHEELGLPNLLGDIVISVPHVERQAADYGHSFERELAFLVVHGFLHLLGYDHMNEEEEKQMFTKQEEILQSYGLGRSES.

The Zn(2+) site is built by H123, H127, and H133.

The protein belongs to the endoribonuclease YbeY family. Requires Zn(2+) as cofactor.

It is found in the cytoplasm. Single strand-specific metallo-endoribonuclease involved in late-stage 70S ribosome quality control and in maturation of the 3' terminus of the 16S rRNA. This is Endoribonuclease YbeY from Shouchella clausii (strain KSM-K16) (Alkalihalobacillus clausii).